The following is a 101-amino-acid chain: MIVPLGQVLMLAGLLFVAGLVGVLLRRNLIMILIGVEIMLNAVGLVLVGASAYWRHPDGQLVALLLMAVAAAEVTIALALVVYLKRSRGTIDINRFDGMKG.

3 consecutive transmembrane segments (helical) span residues 5-25, 29-49, and 62-82; these read LGQVLMLAGLLFVAGLVGVLL, LIMILIGVEIMLNAVGLVLVG, and VALLLMAVAAAEVTIALALVV.

The protein belongs to the complex I subunit 4L family. In terms of assembly, NDH-1 is composed of 14 different subunits. Subunits NuoA, H, J, K, L, M, N constitute the membrane sector of the complex.

The protein resides in the cell inner membrane. The catalysed reaction is a quinone + NADH + 5 H(+)(in) = a quinol + NAD(+) + 4 H(+)(out). In terms of biological role, NDH-1 shuttles electrons from NADH, via FMN and iron-sulfur (Fe-S) centers, to quinones in the respiratory chain. The immediate electron acceptor for the enzyme in this species is believed to be ubiquinone. Couples the redox reaction to proton translocation (for every two electrons transferred, four hydrogen ions are translocated across the cytoplasmic membrane), and thus conserves the redox energy in a proton gradient. The sequence is that of NADH-quinone oxidoreductase subunit K from Syntrophotalea carbinolica (strain DSM 2380 / NBRC 103641 / GraBd1) (Pelobacter carbinolicus).